The sequence spans 243 residues: RWD domain-containing protein 1 (243 aa).

Position 2 is an N-acetylthreonine (Thr2). Residues 10-114 (NELEALESIY…TAVQEKLNEI (105 aa)) enclose the RWD domain. Residues 142–197 (HGTPVTIENFLNWKAKFDAELLEIKKKRMKEEEQAGKNKLSGKQLFETDHNLDTSD) are interaction with DRG2. At Thr144 the chain carries Phosphothreonine. The disordered stretch occupies residues 198–243 (IQFLEDAGNNVEVDESLFQEMDDLELEDDEDDPDYNPADPESDSAD). Over residues 209-243 (EVDESLFQEMDDLELEDDEDDPDYNPADPESDSAD) the composition is skewed to acidic residues.

This sequence belongs to the RWDD1/GIR2 family. In terms of assembly, interacts with DRG2. Interacts with androgen receptor.

In terms of biological role, protects DRG2 from proteolytic degradation. The protein is RWD domain-containing protein 1 (RWDD1) of Homo sapiens (Human).